We begin with the raw amino-acid sequence, 262 residues long: Trypsin eta (262 aa).

The first 22 residues, 1-22 (MNKVILRILAVLFLLGIYAVSA), serve as a signal peptide directing secretion. The propeptide at 23 to 27 (QSDGR) is activation peptide. In terms of domain architecture, Peptidase S1 spans 28–259 (IVGGADTSSY…YKDWIAKQRT (232 aa)). Residues C59 and C75 are joined by a disulfide bond. Catalysis depends on charge relay system residues H74 and D120. Intrachain disulfides connect C185-C200 and C211-C235. Residue S215 is the Charge relay system of the active site.

It belongs to the peptidase S1 family.

It localises to the secreted. Its subcellular location is the extracellular space. It carries out the reaction Preferential cleavage: Arg-|-Xaa, Lys-|-Xaa.. The protein is Trypsin eta (etaTry) of Drosophila melanogaster (Fruit fly).